Consider the following 711-residue polypeptide: Cyclomaltodextrin glucanotransferase (711 aa).

The first 31 residues, 1–31 (MRRWLSLVLSMSFVFSAIFIVSDTQKVTVEA), serve as a signal peptide directing secretion. The segment at 32–165 (AGNLNKVNFT…GIKVIIDFAP (134 aa)) is A1. Ca(2+) contacts are provided by D55, N57, N60, and N61. C71 and C78 are disulfide-bonded. 2 residues coordinate Ca(2+): G79 and D81. 127–128 (YW) provides a ligand contact to substrate. N166 is a binding site for Ca(2+). A b region spans residues 166-229 (NHTSPASETN…NLFDLADLNH (64 aa)). H167 provides a ligand contact to substrate. I217 is a binding site for Ca(2+). 220 to 223 (NLFD) provides a ligand contact to substrate. Ca(2+) is bound at residue D226. Residues 230 to 433 (QNPVIDRYLK…LRRNNPALAY (204 aa)) form an A2 region. A substrate-binding site is contributed by R254. D256 serves as the catalytic Nucleophile. Residue 259–260 (KH) coordinates substrate. A Ca(2+)-binding site is contributed by H260. E284 functions as the Proton donor in the catalytic mechanism. Residues H354, D398, and R402 each contribute to the substrate site. The interval 434 to 522 (GDTEQRWING…EVGVWAYSAT (89 aa)) is c. A d region spans residues 523–606 (ESTPIIGHVG…SAAYDNFEVL (84 aa)). One can recognise an IPT/TIG domain in the interval 526-604 (PIIGHVGPMM…QTSAAYDNFE (79 aa)). The CBM20 domain occupies 605–711 (VLTNDQVSVR…TGKIIVDWQN (107 aa)). Residues 607 to 711 (TNDQVSVRFV…TGKIIVDWQN (105 aa)) form an e region.

Belongs to the glycosyl hydrolase 13 family. As to quaternary structure, monomer. It depends on Ca(2+) as a cofactor.

The protein resides in the secreted. It carries out the reaction Cyclizes part of a (1-&gt;4)-alpha-D-glucan chain by formation of a (1-&gt;4)-alpha-D-glucosidic bond.. The protein is Cyclomaltodextrin glucanotransferase (cgt) of Geobacillus stearothermophilus (Bacillus stearothermophilus).